The chain runs to 78 residues: Protein EcdD (78 aa).

In terms of biological role, involved in the non-oxidative decarboxylation and detoxification of phenolic derivatives under anaerobic conditions, however the precise biochemical function in metabolism of phenolic acid is unknown. The sequence is that of Protein EcdD from Escherichia coli O157:H7.